Reading from the N-terminus, the 90-residue chain is Probable Fe(2+)-trafficking protein (90 aa).

Belongs to the Fe(2+)-trafficking protein family.

Functionally, could be a mediator in iron transactions between iron acquisition and iron-requiring processes, such as synthesis and/or repair of Fe-S clusters in biosynthetic enzymes. In Nitrosospira multiformis (strain ATCC 25196 / NCIMB 11849 / C 71), this protein is Probable Fe(2+)-trafficking protein.